Reading from the N-terminus, the 553-residue chain is Dihydroxy-acid dehydratase (553 aa).

Aspartate 78 lines the Mg(2+) pocket. Cysteine 119 serves as a coordination point for [2Fe-2S] cluster. Residues aspartate 120 and lysine 121 each coordinate Mg(2+). The residue at position 121 (lysine 121) is an N6-carboxylysine. Position 193 (cysteine 193) interacts with [2Fe-2S] cluster. Glutamate 441 is a binding site for Mg(2+). Serine 467 serves as the catalytic Proton acceptor.

This sequence belongs to the IlvD/Edd family. Homodimer. Requires [2Fe-2S] cluster as cofactor. Mg(2+) is required as a cofactor.

It carries out the reaction (2R)-2,3-dihydroxy-3-methylbutanoate = 3-methyl-2-oxobutanoate + H2O. The enzyme catalyses (2R,3R)-2,3-dihydroxy-3-methylpentanoate = (S)-3-methyl-2-oxopentanoate + H2O. It functions in the pathway amino-acid biosynthesis; L-isoleucine biosynthesis; L-isoleucine from 2-oxobutanoate: step 3/4. It participates in amino-acid biosynthesis; L-valine biosynthesis; L-valine from pyruvate: step 3/4. Functionally, functions in the biosynthesis of branched-chain amino acids. Catalyzes the dehydration of (2R,3R)-2,3-dihydroxy-3-methylpentanoate (2,3-dihydroxy-3-methylvalerate) into 2-oxo-3-methylpentanoate (2-oxo-3-methylvalerate) and of (2R)-2,3-dihydroxy-3-methylbutanoate (2,3-dihydroxyisovalerate) into 2-oxo-3-methylbutanoate (2-oxoisovalerate), the penultimate precursor to L-isoleucine and L-valine, respectively. This Citrifermentans bemidjiense (strain ATCC BAA-1014 / DSM 16622 / JCM 12645 / Bem) (Geobacter bemidjiensis) protein is Dihydroxy-acid dehydratase.